The primary structure comprises 218 residues: Histidine biosynthesis bifunctional protein HisIE (218 aa).

Residues 1-131 are phosphoribosyl-AMP cyclohydrolase; the sequence is MAPHQFKSKG…GDYDLPPADT (131 aa). Residues 132–218 form a phosphoribosyl-ATP pyrophosphohydrolase region; that stretch reads LSQVFRVVEE…VYRALQQRRR (87 aa).

It in the N-terminal section; belongs to the PRA-CH family. In the C-terminal section; belongs to the PRA-PH family.

The protein localises to the cytoplasm. The enzyme catalyses 1-(5-phospho-beta-D-ribosyl)-ATP + H2O = 1-(5-phospho-beta-D-ribosyl)-5'-AMP + diphosphate + H(+). It carries out the reaction 1-(5-phospho-beta-D-ribosyl)-5'-AMP + H2O = 1-(5-phospho-beta-D-ribosyl)-5-[(5-phospho-beta-D-ribosylamino)methylideneamino]imidazole-4-carboxamide. It functions in the pathway amino-acid biosynthesis; L-histidine biosynthesis; L-histidine from 5-phospho-alpha-D-ribose 1-diphosphate: step 2/9. The protein operates within amino-acid biosynthesis; L-histidine biosynthesis; L-histidine from 5-phospho-alpha-D-ribose 1-diphosphate: step 3/9. This is Histidine biosynthesis bifunctional protein HisIE from Gloeobacter violaceus (strain ATCC 29082 / PCC 7421).